A 91-amino-acid polypeptide reads, in one-letter code: Small ribosomal subunit protein uS17 (91 aa).

This sequence belongs to the universal ribosomal protein uS17 family. As to quaternary structure, part of the 30S ribosomal subunit.

Its function is as follows. One of the primary rRNA binding proteins, it binds specifically to the 5'-end of 16S ribosomal RNA. The protein is Small ribosomal subunit protein uS17 of Psychrobacter cryohalolentis (strain ATCC BAA-1226 / DSM 17306 / VKM B-2378 / K5).